Here is a 252-residue protein sequence, read N- to C-terminus: 5'-nucleotidase SurE (252 aa).

A divalent metal cation is bound by residues D8, D9, S39, and N91.

The protein belongs to the SurE nucleotidase family. It depends on a divalent metal cation as a cofactor.

It localises to the cytoplasm. It catalyses the reaction a ribonucleoside 5'-phosphate + H2O = a ribonucleoside + phosphate. Nucleotidase that shows phosphatase activity on nucleoside 5'-monophosphates. This is 5'-nucleotidase SurE from Legionella pneumophila (strain Lens).